A 323-amino-acid polypeptide reads, in one-letter code: Dihydrodiol dehydrogenase 3 (323 aa).

Residues 20-24 (GFGTF) and Asp50 each bind NADP(+). Catalysis depends on Tyr55, which acts as the Proton donor. His117 provides a ligand contact to substrate. NADP(+) contacts are provided by residues 166–167 (SN), Gln190, 216–221 (YGALGS), and 270–280 (KSYNKKRIKEN).

The protein belongs to the aldo/keto reductase family.

The protein resides in the cytoplasm. The polypeptide is Dihydrodiol dehydrogenase 3 (Bos taurus (Bovine)).